Reading from the N-terminus, the 614-residue chain is Translation initiation factor IF-2 (614 aa).

A tr-type G domain is found at 115 to 283 (ARAPIVTIMG…ILLIAELNNY (169 aa)). The G1 stretch occupies residues 124–131 (GHVDHGKT). 124–131 (GHVDHGKT) lines the GTP pocket. Residues 149–153 (GITQH) form a G2 region. Positions 170–173 (DTPG) are G3. Residues 170–174 (DTPGH) and 224–227 (NKMD) contribute to the GTP site. A G4 region spans residues 224-227 (NKMD). A G5 region spans residues 260–262 (SAL).

This sequence belongs to the TRAFAC class translation factor GTPase superfamily. Classic translation factor GTPase family. IF-2 subfamily.

The protein localises to the cytoplasm. Functionally, one of the essential components for the initiation of protein synthesis. Protects formylmethionyl-tRNA from spontaneous hydrolysis and promotes its binding to the 30S ribosomal subunits. Also involved in the hydrolysis of GTP during the formation of the 70S ribosomal complex. This Ureaplasma parvum serovar 3 (strain ATCC 27815 / 27 / NCTC 11736) protein is Translation initiation factor IF-2.